Here is a 255-residue protein sequence, read N- to C-terminus: Syntaxin-23 (255 aa).

The disordered stretch occupies residues 1 to 31 (MSFQDLEAGRGRSLASSRNINGGGSRQDTTQ). An N-acetylserine modification is found at serine 2. Positions 14-31 (LASSRNINGGGSRQDTTQ) are enriched in polar residues. One can recognise a t-SNARE coiled-coil homology domain in the interval 184-246 (EAVIEEREQG…AQGKSHLVRH (63 aa)).

It belongs to the syntaxin family. Part of the t-SNARE complex. Interacts with RGS1. In terms of tissue distribution, expressed at higher levels in leaves, flowers and stems than in roots.

It is found in the membrane. In terms of biological role, may function in the docking or fusion of transport vesicles with the prevacuolar membrane. In Arabidopsis thaliana (Mouse-ear cress), this protein is Syntaxin-23 (SYP23).